Consider the following 373-residue polypeptide: MSEKKINLLDLDRKAMRALFADMGEKPFRADQLMKWLYHFGVSDFEEMTNINKVLRQKLAARCEIVAPEISSFQKSTDGTIKFAINVGQGQEVETVYIPEDDRATLCVSSQVGCALECTFCSTGQQGFNRNLTVSEIVGQIWRVSHFLGFAKDTGERPITNVVMMGMGEPLLNLANVIPAMDIMLDDFGFSLSKRRVTLSTSGVVPALDKLGDAIDVALAVSIHAPNDELRDILVPINKKYQLDEFLAGIRRYIAKSNANRGRVTVEYVMLDHINDSTDQAHELAKLMKDTPCKINLIPFNPYPGSPYGRSSNSRIDRFSKVLMEYGFTVIVRKTRGDDIDAACGQLAGDIRDRTKRLAKKRMQENQISVTMN.

Glu-94 serves as the catalytic Proton acceptor. The Radical SAM core domain occupies 100 to 339 (EDDRATLCVS…VIVRKTRGDD (240 aa)). Cys-107 and Cys-344 form a disulfide bridge. The [4Fe-4S] cluster site is built by Cys-114, Cys-118, and Cys-121. S-adenosyl-L-methionine-binding positions include 168–169 (GE), Ser-200, 222–224 (SIH), and Asn-301. Cys-344 serves as the catalytic S-methylcysteine intermediate.

It belongs to the radical SAM superfamily. RlmN family. [4Fe-4S] cluster is required as a cofactor.

It localises to the cytoplasm. It catalyses the reaction adenosine(2503) in 23S rRNA + 2 reduced [2Fe-2S]-[ferredoxin] + 2 S-adenosyl-L-methionine = 2-methyladenosine(2503) in 23S rRNA + 5'-deoxyadenosine + L-methionine + 2 oxidized [2Fe-2S]-[ferredoxin] + S-adenosyl-L-homocysteine. The catalysed reaction is adenosine(37) in tRNA + 2 reduced [2Fe-2S]-[ferredoxin] + 2 S-adenosyl-L-methionine = 2-methyladenosine(37) in tRNA + 5'-deoxyadenosine + L-methionine + 2 oxidized [2Fe-2S]-[ferredoxin] + S-adenosyl-L-homocysteine. Its function is as follows. Specifically methylates position 2 of adenine 2503 in 23S rRNA and position 2 of adenine 37 in tRNAs. m2A2503 modification seems to play a crucial role in the proofreading step occurring at the peptidyl transferase center and thus would serve to optimize ribosomal fidelity. This Shewanella baltica (strain OS155 / ATCC BAA-1091) protein is Dual-specificity RNA methyltransferase RlmN.